Reading from the N-terminus, the 111-residue chain is Universal stress protein B (111 aa).

2 helical membrane-spanning segments follow: residues 1 to 21 (MFST…NMMR) and 90 to 110 (FILT…MLIW).

This sequence belongs to the universal stress protein B family.

Its subcellular location is the cell inner membrane. This is Universal stress protein B from Photorhabdus laumondii subsp. laumondii (strain DSM 15139 / CIP 105565 / TT01) (Photorhabdus luminescens subsp. laumondii).